The sequence spans 140 residues: Sperm protein associated with the nucleus on the X chromosome N3 (140 aa).

Polar residues-rich tracts occupy residues 1 to 20, 62 to 79, and 131 to 140; these read MEQPTSSTNGEKTKSPCKSN, INSNQLENDQSQENSINP, and EGSSQDSGED. The tract at residues 1–140 is disordered; that stretch reads MEQPTSSTNG…EGSSQDSGED (140 aa).

The protein belongs to the SPAN-X family.

The polypeptide is Sperm protein associated with the nucleus on the X chromosome N3 (SPANXN3) (Pan troglodytes (Chimpanzee)).